We begin with the raw amino-acid sequence, 167 residues long: NAD(P)H-quinone oxidoreductase subunit I, chloroplastic (167 aa).

2 4Fe-4S ferredoxin-type domains span residues G55–K84 and L95–E124. 8 residues coordinate [4Fe-4S] cluster: C64, C67, C70, C74, C104, C107, C110, and C114.

The protein belongs to the complex I 23 kDa subunit family. As to quaternary structure, NDH is composed of at least 16 different subunits, 5 of which are encoded in the nucleus. Requires [4Fe-4S] cluster as cofactor.

The protein localises to the plastid. It is found in the chloroplast thylakoid membrane. The enzyme catalyses a plastoquinone + NADH + (n+1) H(+)(in) = a plastoquinol + NAD(+) + n H(+)(out). It carries out the reaction a plastoquinone + NADPH + (n+1) H(+)(in) = a plastoquinol + NADP(+) + n H(+)(out). In terms of biological role, NDH shuttles electrons from NAD(P)H:plastoquinone, via FMN and iron-sulfur (Fe-S) centers, to quinones in the photosynthetic chain and possibly in a chloroplast respiratory chain. The immediate electron acceptor for the enzyme in this species is believed to be plastoquinone. Couples the redox reaction to proton translocation, and thus conserves the redox energy in a proton gradient. The sequence is that of NAD(P)H-quinone oxidoreductase subunit I, chloroplastic from Aethionema grandiflorum (Persian stone-cress).